We begin with the raw amino-acid sequence, 430 residues long: Tol-Pal system protein TolB (430 aa).

The first 21 residues, Met-1–Ala-21, serve as a signal peptide directing secretion.

Belongs to the TolB family. As to quaternary structure, the Tol-Pal system is composed of five core proteins: the inner membrane proteins TolA, TolQ and TolR, the periplasmic protein TolB and the outer membrane protein Pal. They form a network linking the inner and outer membranes and the peptidoglycan layer.

It is found in the periplasm. Its function is as follows. Part of the Tol-Pal system, which plays a role in outer membrane invagination during cell division and is important for maintaining outer membrane integrity. TolB occupies a key intermediary position in the Tol-Pal system because it communicates directly with both membrane-embedded components, Pal in the outer membrane and TolA in the inner membrane. The polypeptide is Tol-Pal system protein TolB (Salmonella typhi).